The chain runs to 349 residues: Secondary metabolism regulator LAE1 (349 aa).

A disordered region spans residues 1–46 (MSSRNAPSGCVAPSPATAAPPSPTNLRLTVGQSGSESANEPGGEPE). Residues 25–38 (NLRLTVGQSGSESA) are compositionally biased toward polar residues.

The protein belongs to the methyltransferase superfamily. LaeA methyltransferase family. In terms of assembly, component of the heterotrimeric velvet complex composed of LAE1, VEL1 and VEL2; VEL1 acting as a bridging protein between LAE1 and VEL2.

It localises to the nucleus. The enzyme catalyses L-methionyl-[protein] + S-adenosyl-L-methionine = S-methyl-L-methionyl-[protein] + S-adenosyl-L-homocysteine. Methyltransferase that performs automethylation. No other methyl-accepting substrate has been identified yet. Component of the velvet transcription factor complex that acts as a global regulator for secondary metabolite gene expression. Controls the expression of the gamma-pentyl-pyrone gene clusters. Required for the expression of cellulase. Regulates asexual sporulation (conidiation) by environmental stimuli such as light and/or mechanical injury. Required for oxidative stress tolerance. Also plays a role in defense and parasitism on other fungi. This Hypocrea atroviridis (strain ATCC 20476 / IMI 206040) (Trichoderma atroviride) protein is Secondary metabolism regulator LAE1.